A 379-amino-acid chain; its full sequence is Lactosylceramide 1,3-N-acetyl-beta-D-glucosaminyltransferase A (379 aa).

Residues 1 to 12 (MFMNCRRVKKWH) are Cytoplasmic-facing. A helical; Signal-anchor for type II membrane protein transmembrane segment spans residues 13 to 30 (FLQLLSMCCVMSVLMVCW). Residues 31 to 379 (EHVDHHVVSH…NTYSCMAAFT (349 aa)) lie on the Lumenal side of the membrane. N-linked (GlcNAc...) asparagine glycans are attached at residues Asn-57, Asn-113, Asn-168, and Asn-277.

Belongs to the glycosyltransferase 31 family.

The protein resides in the golgi apparatus membrane. The catalysed reaction is a beta-D-Gal-(1-&gt;4)-beta-D-Glc-(1&lt;-&gt;1)-Cer(d18:1(4E)) + UDP-N-acetyl-alpha-D-glucosamine = a beta-D-GlcNAc-(1-&gt;3)-beta-D-Gal-(1-&gt;4)-beta-D-Glc-(1&lt;-&gt;1)-Cer(d18:1(4E)) + UDP + H(+). It catalyses the reaction a neolactoside nLc4Cer(d18:1(4E)) + UDP-N-acetyl-alpha-D-glucosamine = a neolactoside IV(3)-beta-GlcNAc-nLc4Cer(d18:1(4E)) + UDP + H(+). Its pathway is protein modification; protein glycosylation. In terms of biological role, beta-1,3-N-acetylglucosaminyltransferase that plays a key role in the synthesis of lacto- or neolacto-series carbohydrate chains on glycolipids. In Danio rerio (Zebrafish), this protein is Lactosylceramide 1,3-N-acetyl-beta-D-glucosaminyltransferase A (b3gnt5a).